A 350-amino-acid chain; its full sequence is Beta-hexosaminidase (350 aa).

Residues D62, R70, R133, and 163-164 (KH) each bind substrate. The active-site Proton donor/acceptor is H176. Catalysis depends on D248, which acts as the Nucleophile.

This sequence belongs to the glycosyl hydrolase 3 family. NagZ subfamily.

Its subcellular location is the cytoplasm. The enzyme catalyses Hydrolysis of terminal non-reducing N-acetyl-D-hexosamine residues in N-acetyl-beta-D-hexosaminides.. It participates in cell wall biogenesis; peptidoglycan recycling. Plays a role in peptidoglycan recycling by cleaving the terminal beta-1,4-linked N-acetylglucosamine (GlcNAc) from peptide-linked peptidoglycan fragments, giving rise to free GlcNAc, anhydro-N-acetylmuramic acid and anhydro-N-acetylmuramic acid-linked peptides. This chain is Beta-hexosaminidase, found in Haemophilus influenzae (strain PittEE).